Here is a 450-residue protein sequence, read N- to C-terminus: Probable ECA polymerase (450 aa).

The next 11 membrane-spanning stretches (helical) occupy residues 6–26 (FSGL…LTWF), 37–57 (VFFS…TSVL), 63–83 (VGVA…CFYA), 118–138 (VILM…NGFL), 155–175 (GVAL…VYFL), 181–201 (AWLF…MIVG), 207–227 (IIIA…ISLW), 228–248 (MLAA…LKRY), 341–361 (LVVM…GLII), 378–398 (YKAA…IVLA), and 410–430 (VFFI…YWLF).

It belongs to the WzyE family. Probably part of a complex composed of WzxE, WzyE and WzzE.

It is found in the cell inner membrane. The protein operates within bacterial outer membrane biogenesis; enterobacterial common antigen biosynthesis. Its function is as follows. Probably involved in the polymerization of enterobacterial common antigen (ECA) trisaccharide repeat units. This Escherichia fergusonii (strain ATCC 35469 / DSM 13698 / CCUG 18766 / IAM 14443 / JCM 21226 / LMG 7866 / NBRC 102419 / NCTC 12128 / CDC 0568-73) protein is Probable ECA polymerase.